Reading from the N-terminus, the 444-residue chain is Aspartate--tRNA(Asp/Asn) ligase (444 aa).

E176 contacts L-aspartate. Positions Q198–K201 are aspartate. Residue R220 coordinates L-aspartate. Residues R220–E222, R228–L230, and E367 each bind ATP. Positions 367 and 370 each coordinate Mg(2+). L-aspartate is bound by residues S370 and R374. G415–R418 serves as a coordination point for ATP.

The protein belongs to the class-II aminoacyl-tRNA synthetase family. Type 2 subfamily. In terms of assembly, homodimer. Mg(2+) is required as a cofactor.

The protein resides in the cytoplasm. The enzyme catalyses tRNA(Asx) + L-aspartate + ATP = L-aspartyl-tRNA(Asx) + AMP + diphosphate. Aspartyl-tRNA synthetase with relaxed tRNA specificity since it is able to aspartylate not only its cognate tRNA(Asp) but also tRNA(Asn). Reaction proceeds in two steps: L-aspartate is first activated by ATP to form Asp-AMP and then transferred to the acceptor end of tRNA(Asp/Asn). This is Aspartate--tRNA(Asp/Asn) ligase from Methanosarcina barkeri (strain Fusaro / DSM 804).